Here is a 445-residue protein sequence, read N- to C-terminus: DNA primase DnaG (445 aa).

Residues 166-252 (DAIVVVEGRS…SVEDLSRSEV (87 aa)) enclose the Toprim domain. Positions 172, 214, and 216 each coordinate Mg(2+). A disordered region spans residues 276–355 (EEMSQAGEST…NGDGPTIPSL (80 aa)). Residues 284–298 (STTADGGAVAAATSD) are compositionally biased toward low complexity. The segment covering 303–313 (NQPSPSSQTGS) has biased composition (polar residues). The segment covering 324 to 337 (SVVDNSNATAVADA) has biased composition (low complexity).

This sequence belongs to the archaeal DnaG primase family. As to quaternary structure, forms a ternary complex with MCM helicase and DNA. It depends on Mg(2+) as a cofactor.

It catalyses the reaction ssDNA + n NTP = ssDNA/pppN(pN)n-1 hybrid + (n-1) diphosphate.. Its function is as follows. RNA polymerase that catalyzes the synthesis of short RNA molecules used as primers for DNA polymerase during DNA replication. The protein is DNA primase DnaG of Haloarcula marismortui (strain ATCC 43049 / DSM 3752 / JCM 8966 / VKM B-1809) (Halobacterium marismortui).